The sequence spans 363 residues: Heat-inducible transcription repressor HrcA (363 aa).

The protein belongs to the HrcA family.

Its function is as follows. Negative regulator of class I heat shock genes (grpE-dnaK-dnaJ and groELS operons). Prevents heat-shock induction of these operons. The chain is Heat-inducible transcription repressor HrcA from Afipia carboxidovorans (strain ATCC 49405 / DSM 1227 / KCTC 32145 / OM5) (Oligotropha carboxidovorans).